The following is a 588-amino-acid chain: Cation channel sperm-associated protein 2 (588 aa).

Over 1-106 the chain is Cytoplasmic; that stretch reads MAQEQGHFQL…LWAGWVLDSS (106 aa). A helical transmembrane segment spans residues 107–129; sequence VFSKFIISLIFLNTFVLMVEIEL. Over 130–138 the chain is Extracellular; it reads MESTNTALW. A helical membrane pass occupies residues 139-164; sequence PVKLALEVADWFILLSFIVEILLMWL. The Cytoplasmic portion of the chain corresponds to 165–173; the sequence is ASFSLFWKD. The chain crosses the membrane as a helical span at residues 174–198; the sequence is AWNVFDFFVTLLSLLPELVVLLGVP. At 199–201 the chain is on the extracellular side; it reads AHS. The helical transmembrane segment at 202-220 threads the bilayer; the sequence is VWLQLLRVCRVLRSLKLFA. Topologically, residues 221 to 237 are cytoplasmic; sequence RFRQIKVILLALVRALK. The helical transmembrane segment at 238–260 threads the bilayer; it reads SMTFLLMLLLIFFYIFAVTGVYF. Residues 261-279 are Extracellular-facing; it reads FREYSRSTIEGLEYNMFFS. Residues 280–292 constitute an intramembrane region (helical; Pore-forming); sequence DLLNSLVTVFILF. At 293–312 the chain is on the extracellular side; the sequence is TLDHWYAVLQDIWKVPESSR. Residues 313–339 traverse the membrane as a helical segment; that stretch reads VFSSIYVILWLLLGSIIFRNIIVAMMV. The Cytoplasmic segment spans residues 340 to 588; that stretch reads TNFQNIRSEL…VQALMSFEDK (249 aa). Residues 376–512 are disordered; it reads SESLRGTSLG…YPVSHSISSH (137 aa). Positions 390–439 are enriched in acidic residues; sequence DIIETSDASDDDDDDDDDDDDDDDDDDDKSDATESDNEESDSENSESENS. The span at 440 to 502 shows a compositional bias: basic and acidic residues; sequence ESEKIDPEKD…KVKEESKEKA (63 aa).

The protein belongs to the cation channel sperm-associated (TC 1.A.1.19) family. As to quaternary structure, component of the CatSper complex or CatSpermasome composed of the core pore-forming members CATSPER1, CATSPER2, CATSPER3 and CATSPER4 as well as auxiliary members CATSPERB, CATSPERG2, CATSPERD, CATSPERE, CATSPERZ, C2CD6/CATSPERT, SLCO6C1, TMEM249, TMEM262 and EFCAB9. HSPA1 may be an additional auxiliary complex member. The core complex members CATSPER1, CATSPER2, CATSPER3 and CATSPER4 form a heterotetrameric channel. The auxiliary CATSPERB, CATSPERG2, CATSPERD and CATSPERE subunits form a pavilion-like structure over the pore which stabilizes the complex through interactions with CATSPER4, CATSPER3, CATSPER1 and CATSPER2 respectively. SLCO6C1 interacts with CATSPERE and TMEM262/CATSPERH interacts with CATSPERB, further stabilizing the complex. C2CD6/CATSPERT interacts at least with CATSPERD and is required for targeting the CatSper complex in the flagellar membrane. Interacts with Ca(v)3.3/CACNA1I, leading to suppression of T-type calcium channel activity. As to expression, testis-specific.

The protein localises to the cell projection. It is found in the cilium. It localises to the flagellum membrane. The catalysed reaction is Ca(2+)(in) = Ca(2+)(out). Its activity is regulated as follows. In contrast to the human ortholog, not activated by progesterone. Activated by intracellular alkalinization. Its function is as follows. Pore-forming subunit of the CatSper complex, a sperm-specific voltage-gated calcium channel that plays a central role in sperm cell hyperactivation. Controls calcium entry to mediate the hyperactivated motility, a step needed for sperm motility which is essential late in the preparation of sperm for fertilization. This Mus musculus (Mouse) protein is Cation channel sperm-associated protein 2 (Catsper2).